A 141-amino-acid polypeptide reads, in one-letter code: Hemoglobin subunit alpha (141 aa).

In terms of domain architecture, Globin spans 1–141 (VLSGDDKSNL…VSTVLTSKYR (141 aa)). Position 3 is a phosphoserine (serine 3). An N6-succinyllysine mark is found at lysine 7 and lysine 11. The residue at position 16 (lysine 16) is an N6-acetyllysine; alternate. Position 16 is an N6-succinyllysine; alternate (lysine 16). Tyrosine 24 is subject to Phosphotyrosine. Lysine 40 carries the post-translational modification N6-succinyllysine. Serine 49 carries the phosphoserine modification. Position 58 (histidine 58) interacts with O2. Histidine 87 serves as a coordination point for heme b. Position 102 is a phosphoserine (serine 102). At threonine 108 the chain carries Phosphothreonine. 2 positions are modified to phosphoserine: serine 124 and serine 131. Phosphothreonine is present on residues threonine 134 and threonine 137. At serine 138 the chain carries Phosphoserine.

It belongs to the globin family. In terms of assembly, heterotetramer of two alpha chains and two beta chains. As to expression, red blood cells.

Involved in oxygen transport from the lung to the various peripheral tissues. This chain is Hemoglobin subunit alpha, found in Microtus pennsylvanicus (Meadow vole).